Here is a 413-residue protein sequence, read N- to C-terminus: Serine--tRNA ligase (413 aa).

An L-serine-binding site is contributed by 221–223; that stretch reads TAE. Residue 252 to 254 coordinates ATP; the sequence is RRE. Position 275 (Glu275) interacts with L-serine. 339-342 provides a ligand contact to ATP; that stretch reads EVSS. Ser375 provides a ligand contact to L-serine.

Belongs to the class-II aminoacyl-tRNA synthetase family. Type-1 seryl-tRNA synthetase subfamily. In terms of assembly, homodimer. The tRNA molecule binds across the dimer.

Its subcellular location is the cytoplasm. The enzyme catalyses tRNA(Ser) + L-serine + ATP = L-seryl-tRNA(Ser) + AMP + diphosphate + H(+). It carries out the reaction tRNA(Sec) + L-serine + ATP = L-seryl-tRNA(Sec) + AMP + diphosphate + H(+). It participates in aminoacyl-tRNA biosynthesis; selenocysteinyl-tRNA(Sec) biosynthesis; L-seryl-tRNA(Sec) from L-serine and tRNA(Sec): step 1/1. Catalyzes the attachment of serine to tRNA(Ser). Is also able to aminoacylate tRNA(Sec) with serine, to form the misacylated tRNA L-seryl-tRNA(Sec), which will be further converted into selenocysteinyl-tRNA(Sec). This is Serine--tRNA ligase from Dehalococcoides mccartyi (strain ATCC BAA-2266 / KCTC 15142 / 195) (Dehalococcoides ethenogenes (strain 195)).